The sequence spans 194 residues: MGPSGAGTRGGQAQFQWEEVRNDKQKGRYLGQSIYAASGRWAEGKDLEWWSKGRTTQSAINSENSDKEKYKKEILEIKEREQRMLAEALGLPQPSALALTSSKAANRSSTNTEKDSRSIAHSTSRSRSTSPANRHRRKEKERTRSNHRHGSHRRHEPYRTHLSRHHRHSTTNYHSKRDDRYERRREHSPNDGGS.

Disordered regions lie at residues lysine 52–lysine 71 and alanine 86–serine 194. Composition is skewed to polar residues over residues glycine 53–glutamate 63, alanine 98–asparagine 111, and isoleucine 119–alanine 132. Basic residues predominate over residues asparagine 133–serine 169. Over residues serine 175 to serine 194 the composition is skewed to basic and acidic residues.

This is an uncharacterized protein from Schizosaccharomyces pombe (strain 972 / ATCC 24843) (Fission yeast).